Reading from the N-terminus, the 601-residue chain is Elongation factor 4 (601 aa).

The 183-residue stretch at 7–189 folds into the tr-type G domain; that stretch reads RNIRNFSIIA…AIVHRIPPPA (183 aa). GTP is bound by residues 19–24 and 136–139; these read DHGKST and NKID.

It belongs to the TRAFAC class translation factor GTPase superfamily. Classic translation factor GTPase family. LepA subfamily.

The protein resides in the cell inner membrane. The enzyme catalyses GTP + H2O = GDP + phosphate + H(+). Its function is as follows. Required for accurate and efficient protein synthesis under certain stress conditions. May act as a fidelity factor of the translation reaction, by catalyzing a one-codon backward translocation of tRNAs on improperly translocated ribosomes. Back-translocation proceeds from a post-translocation (POST) complex to a pre-translocation (PRE) complex, thus giving elongation factor G a second chance to translocate the tRNAs correctly. Binds to ribosomes in a GTP-dependent manner. This Xanthomonas oryzae pv. oryzae (strain MAFF 311018) protein is Elongation factor 4.